The primary structure comprises 379 residues: UDP-4-amino-4-deoxy-L-arabinose--oxoglutarate aminotransferase (379 aa).

N6-(pyridoxal phosphate)lysine is present on lysine 182.

It belongs to the DegT/DnrJ/EryC1 family. ArnB subfamily. Homodimer. Requires pyridoxal 5'-phosphate as cofactor.

It carries out the reaction UDP-4-amino-4-deoxy-beta-L-arabinose + 2-oxoglutarate = UDP-beta-L-threo-pentopyranos-4-ulose + L-glutamate. Its pathway is nucleotide-sugar biosynthesis; UDP-4-deoxy-4-formamido-beta-L-arabinose biosynthesis; UDP-4-deoxy-4-formamido-beta-L-arabinose from UDP-alpha-D-glucuronate: step 2/3. The protein operates within bacterial outer membrane biogenesis; lipopolysaccharide biosynthesis. Catalyzes the conversion of UDP-4-keto-arabinose (UDP-Ara4O) to UDP-4-amino-4-deoxy-L-arabinose (UDP-L-Ara4N). The modified arabinose is attached to lipid A and is required for resistance to polymyxin and cationic antimicrobial peptides. The polypeptide is UDP-4-amino-4-deoxy-L-arabinose--oxoglutarate aminotransferase (Escherichia coli O8 (strain IAI1)).